Here is a 504-residue protein sequence, read N- to C-terminus: ATP-dependent rRNA helicase RRP3 (504 aa).

Low complexity predominate over residues Ala-34–Ser-62. Residues Ala-34–Ser-99 form a disordered region. The span at Ser-68–Gln-79 shows a compositional bias: basic and acidic residues. Low complexity predominate over residues Ser-80–Ser-99. Residues Gln-98 to Ala-126 carry the Q motif motif. In terms of domain architecture, Helicase ATP-binding spans Ile-129–Glu-301. An ATP-binding site is contributed by Ala-142–Thr-149. A DEAD box motif is present at residues Asp-248–Asp-251. The 145-residue stretch at Arg-327 to Leu-471 folds into the Helicase C-terminal domain.

The protein belongs to the DEAD box helicase family. DDX47/RRP3 subfamily. Interacts with the SSU processome.

The protein localises to the nucleus. The catalysed reaction is ATP + H2O = ADP + phosphate + H(+). In terms of biological role, ATP-dependent rRNA helicase required for pre-ribosomal RNA processing. Involved in the maturation of the 35S-pre-rRNA and to its cleavage to mature 18S rRNA. In Lodderomyces elongisporus (strain ATCC 11503 / CBS 2605 / JCM 1781 / NBRC 1676 / NRRL YB-4239) (Yeast), this protein is ATP-dependent rRNA helicase RRP3.